A 439-amino-acid polypeptide reads, in one-letter code: Adenylosuccinate synthetase (439 aa).

Residues 13–19 and 41–43 each bind GTP; these read GDEGKGK and GHT. Aspartate 14 acts as the Proton acceptor in catalysis. Aspartate 14 and glycine 41 together coordinate Mg(2+). IMP is bound by residues 14–17, 39–42, threonine 130, arginine 144, glutamine 226, threonine 241, and arginine 313; these read DEGK and NAGH. Histidine 42 functions as the Proton donor in the catalytic mechanism. 309 to 315 contacts substrate; it reads ASTGRQR. Residues arginine 315, 341-343, and 422-424 contribute to the GTP site; these read KLD and STG.

Belongs to the adenylosuccinate synthetase family. As to quaternary structure, homodimer. The cofactor is Mg(2+).

Its subcellular location is the cytoplasm. It catalyses the reaction IMP + L-aspartate + GTP = N(6)-(1,2-dicarboxyethyl)-AMP + GDP + phosphate + 2 H(+). It participates in purine metabolism; AMP biosynthesis via de novo pathway; AMP from IMP: step 1/2. Functionally, plays an important role in the de novo pathway of purine nucleotide biosynthesis. Catalyzes the first committed step in the biosynthesis of AMP from IMP. This Acinetobacter baylyi (strain ATCC 33305 / BD413 / ADP1) protein is Adenylosuccinate synthetase.